The sequence spans 442 residues: MSDSPSRQQQLLRAQSNDPSFDNVWDELIWRGLVYVSTDEAALKQLLAGEPIAYYCGFDPTAPSLHLGNLVQLLTMRRLQLAGHRPFGLVGGSTGLIGDPKPSAERTLNAKETVAEWVGSLREQVTRFLSAEGDNAVRLVNNLDWTAPLSAIDFLREIGKHFRVGAMLKKDAVAARLNSDEGISYTEFSYQILQGLDYLELYRQHGCVLQTGGSDQWGNLTSGTELIRRVEGGHAHAVGTPLITNSDGTKFGKSEGNAVWLDPALTSPYAMYQFWLNTDDADVIARLKVFTFLHRDEIERLERAVAEEPFRREAQRRLALDVTSLVHGAAAAEAVIAASEALFGRGGDLAQQDTDTLASALRELPHTVSAPGVAIAQALVDTGLTKSLSEARRAVAQGGVSANNATVQDADAPVGDALLPGGMLVLRRGKKTLAGVFVEEGV.

Tyr55 contacts L-tyrosine. Positions 60–69 (PTAPSLHLGN) match the 'HIGH' region motif. Tyr190 and Gln194 together coordinate L-tyrosine. The short motif at 250 to 254 (KFGKS) is the 'KMSKS' region element. Lys253 is an ATP binding site. One can recognise an S4 RNA-binding domain in the interval 373–438 (VAIAQALVDT…GKKTLAGVFV (66 aa)).

Belongs to the class-I aminoacyl-tRNA synthetase family. TyrS type 1 subfamily. As to quaternary structure, homodimer.

Its subcellular location is the cytoplasm. It carries out the reaction tRNA(Tyr) + L-tyrosine + ATP = L-tyrosyl-tRNA(Tyr) + AMP + diphosphate + H(+). In terms of biological role, catalyzes the attachment of tyrosine to tRNA(Tyr) in a two-step reaction: tyrosine is first activated by ATP to form Tyr-AMP and then transferred to the acceptor end of tRNA(Tyr). The chain is Tyrosine--tRNA ligase from Leifsonia xyli subsp. xyli (strain CTCB07).